The following is a 172-amino-acid chain: PRELI domain containing protein 3A (172 aa).

In terms of domain architecture, PRELI/MSF1 spans 1–172 (MKIWSSEHVF…IIEHSESAVS (172 aa)).

The protein belongs to the slowmo family. Interacts with TRIAP1.

It is found in the mitochondrion. Functionally, in vitro, the TRIAP1:PRELID3A complex mediates the transfer of phosphatidic acid (PA) between liposomes and probably functions as a PA transporter across the mitochondrion intermembrane space. Phosphatidic acid import is required for cardiolipin (CL) synthesis in the mitochondrial inner membrane. The chain is PRELI domain containing protein 3A (PRELID3A) from Homo sapiens (Human).